The sequence spans 331 residues: MSSASLLWCHSGVSTVRFGERIFTLVAGDLLFAPEEAQVADDSQGLVLNIRFETLNIMGPARRIHLGHVWNDRLTFEYSRSLFGKETLSPDIARLFTDRVPTPPLPAPRKARAVAQVLVSNPADQTSLEEFAEIQGVSARTLQRQFLKSTGYSFSEWRAAQRVCVAASLLAHDFSISVVANLVGFAATSSLTRAFRRHTGATPSTFTTGQIGMGSAGHPPRIPATTTFAEAHQDQQLWIYSGTATVTTPGYCRFMGQGDMVTIPAGTQTRIDVAAGSIAFPVPVGLDEWGMDLTRVVAVNNQQPKPLTILEQSEWSKLSEELLNTPVPVQM.

The HTH araC/xylS-type domain occupies 112-209 (RAVAQVLVSN…GATPSTFTTG (98 aa)). DNA-binding regions (H-T-H motif) lie at residues 129-150 (EEFA…LKST) and 176-199 (ISVV…RRHT).

Functionally, under iron limitation, RipA negatively controls the expression of the acn (aconitase), catA (catechol 1,2 dioxygenase), leuCD (isopropylmalate dehydratase), narKGHJI (nitrite/nitrate transporter and nitrate reductase), sdhCAB (succinate dehydrogenase), pta (phosphotransacetylase) and katA (catalase) genes. Binds to the consensus sequence in the promoter region. In Corynebacterium glutamicum (strain ATCC 13032 / DSM 20300 / JCM 1318 / BCRC 11384 / CCUG 27702 / LMG 3730 / NBRC 12168 / NCIMB 10025 / NRRL B-2784 / 534), this protein is HTH-type transcriptional regulator RipA.